Consider the following 628-residue polypeptide: Hepatocyte nuclear factor 1-alpha (628 aa).

The segment at 1–31 (MVSKLSQLQTELLAALLESGLSKEALIQALG) is dimerization. The 32-residue stretch at 1 to 32 (MVSKLSQLQTELLAALLESGLSKEALIQALGE) folds into the HNF-p1 domain. A disordered region spans residues 47-79 (GESCGGTRGDLTELPNGLGETRGSEDDTDDDGE). Ser70 carries the post-translational modification Phosphoserine. Thr74 is subject to Phosphothreonine. Residues 87 to 182 (KELENLSPEE…VAQQFTHAGQ (96 aa)) form the POU-specific atypical domain. Position 93 is a phosphoserine (Ser93). Lys117 participates in a covalent cross-link: Glycyl lysine isopeptide (Lys-Gly) (interchain with G-Cter in ubiquitin). 4 interaction with DNA regions span residues 130–132 (QRE), 143–149 (HLSQHLN), 155–158 (KTQK), and 203–206 (RFKW). The segment at 183–205 (GGLIEEPTGDELPTKKGRRNRFK) is disordered. The Nuclear localization signal motif lies at 197 to 205 (KKGRRNRFK). Positions 199–279 (GRRNRFKWGP…NRRKEEAFRH (81 aa)) form a DNA-binding region, homeobox; HNF1-type. At Ser247 the chain carries Phosphoserine. 2 interaction with DNA regions span residues 263-265 (RVY) and 270-273 (NRRK). 2 disordered regions span residues 284–338 (DTYN…SSSG) and 541–585 (FTSD…LSTS). Residues 288–298 (GPPPGPGPGPA) are compositionally biased toward pro residues. Ser313 carries the post-translational modification Phosphoserine. Polar residues-rich tracts occupy residues 324–338 (QSATSEAAEVPSSSG) and 558–575 (SPATTIHIPSQDPSNIQH).

The protein belongs to the HNF1 homeobox family. As to quaternary structure, binds DNA as a dimer. Heterotetramer with PCBD1; formed by a dimer of dimers. Interacts with PCBD1. Interacts with BHLHE41. Interacts with NR5A2. Interacts with SPOP; this interaction promotes ubiquitination and degradation of HNF1A. Ubiquitinated in s SPOP-dependent manner; leading to prteasomal degradation. Liver.

The protein localises to the nucleus. Its function is as follows. Transcriptional activator that regulates the tissue specific expression of multiple genes, especially in pancreatic islet cells and in liver. Binds to the inverted palindrome 5'-GTTAATNATTAAC-3'. Activates the transcription of CYP1A2, CYP2E1 and CYP3A11. In Rattus norvegicus (Rat), this protein is Hepatocyte nuclear factor 1-alpha (Hnf1a).